Reading from the N-terminus, the 104-residue chain is Naphthalene 1,2-dioxygenase system, ferredoxin component (104 aa).

The Rieske domain maps to 6–101 (IDAVALYEIP…VKIEGQRVMI (96 aa)). Residues C45, H47, C64, and H67 each contribute to the [2Fe-2S] cluster site.

It belongs to the bacterial ring-hydroxylating dioxygenase ferredoxin component family. The naphthalene dioxygenase (NDO) multicomponent enzyme system is composed of an electron transfer component and a dioxygenase component (iron sulfur protein (ISP)). The electron transfer component is composed of a ferredoxin reductase (NdoR) and a ferredoxin (NdoA), and the dioxygenase component is formed of a heterohexamer (trimer of heterodimers) of three large alpha subunits (NdoB) and three small beta subunits (NdoC). [2Fe-2S] cluster serves as cofactor.

It participates in aromatic compound metabolism; naphthalene degradation. In terms of biological role, component of the naphthalene dioxygenase (NDO) multicomponent enzyme system which catalyzes the incorporation of both atoms of molecular oxygen into naphthalene to form cis-(1R,2S)-dihydroxy-1,2-dihydronaphthalene. Functions as an intermediate electron transfer protein via a specific interaction with iron sulfur protein components (ISP) (NdoB and NdoC). This chain is Naphthalene 1,2-dioxygenase system, ferredoxin component, found in Pseudomonas aeruginosa.